A 374-amino-acid polypeptide reads, in one-letter code: Aminomethyltransferase (374 aa).

Belongs to the GcvT family. The glycine cleavage system is composed of four proteins: P, T, L and H.

The catalysed reaction is N(6)-[(R)-S(8)-aminomethyldihydrolipoyl]-L-lysyl-[protein] + (6S)-5,6,7,8-tetrahydrofolate = N(6)-[(R)-dihydrolipoyl]-L-lysyl-[protein] + (6R)-5,10-methylene-5,6,7,8-tetrahydrofolate + NH4(+). Its function is as follows. The glycine cleavage system catalyzes the degradation of glycine. The protein is Aminomethyltransferase of Prochlorococcus marinus (strain MIT 9303).